The primary structure comprises 127 residues: Protein ApaG (127 aa).

Residues 3–127 (KSETYRIEVE…FMLAMPRVLH (125 aa)) enclose the ApaG domain.

This Azoarcus sp. (strain BH72) protein is Protein ApaG.